The following is a 477-amino-acid chain: PTS system glucose-specific EIICB component (477 aa).

At 1-14 (MFKNAFANLQKVGK) the chain is on the cytoplasmic side. One can recognise a PTS EIIC type-1 domain in the interval 1 to 388 (MFKNAFANLQ…LDLKTPGRED (388 aa)). The chain crosses the membrane as a helical span at residues 15-35 (SLMLPVSVLPIAGILLGVGSA). Topologically, residues 36–50 (NFSWLPAVVSHVMAE) are periplasmic. The helical transmembrane segment at 51–71 (AGGSVFANMPLIFAIGVALGF) threads the bilayer. At 72-79 (TNNDGVSA) the chain is on the cytoplasmic side. Residues 80–100 (LAAVVAYGIMVKTMAVVAPLV) traverse the membrane as a helical segment. At 101–111 (LHLPAEEIAAK) the chain is on the periplasmic side. Residues 112-132 (HLADTGVLGGIISGAIAAYMF) form a helical membrane-spanning segment. At 133-151 (NRFYRIKLPEYLGFFAGKR) the chain is on the cytoplasmic side. The helical transmembrane segment at 152–172 (FVPIISGLAAIFTGVVLSFVW) threads the bilayer. The Periplasmic portion of the chain corresponds to 173-190 (PPIGTAIQAFSQWAAYQN). A helical membrane pass occupies residues 191-211 (PVVAFGIYGFIERCLVPFGLH). The Cytoplasmic portion of the chain corresponds to 212 to 248 (HIWNVPFQMQIGEYTNAAGQVFHGDIPRYMAGDPTAG). Residues 249-269 (MLSGGFLFKMYGLPAAAIAIW) traverse the membrane as a helical segment. The Periplasmic segment spans residues 270–279 (HSAKPENRAK). Residues 280 to 300 (VGGIMISAALTSFLTGITEPI) form a helical membrane-spanning segment. Over 301–309 (EFSFMFVAP) the chain is Cytoplasmic. The helical transmembrane segment at 310–330 (ILYIIHAILAGLAFPICILLG) threads the bilayer. Residues 331–355 (MRDGTSFSHGLIDFIVLSGNSSKLW) lie on the Periplasmic side of the membrane. The chain crosses the membrane as a helical span at residues 356 to 376 (LFPIVGAGYAIVYYTVFRVLI). Over 377-477 (KALDLKTPGR…TEMDEYIRNS (101 aa)) the chain is Cytoplasmic. The 79-residue stretch at 399–477 (SEMAPALVAA…TEMDEYIRNS (79 aa)) folds into the PTS EIIB type-1 domain. Residue Cys421 is the Phosphocysteine intermediate; for EIIB activity of the active site. Phosphocysteine is present on Cys421.

It is found in the cell inner membrane. The enzyme catalyses N(pros)-phospho-L-histidyl-[protein] + D-glucose(out) = D-glucose 6-phosphate(in) + L-histidyl-[protein]. The phosphoenolpyruvate-dependent sugar phosphotransferase system (sugar PTS), a major carbohydrate active transport system, catalyzes the phosphorylation of incoming sugar substrates concomitantly with their translocation across the cell membrane. The enzyme II complex composed of PtsG and Crr is involved in glucose transport. Also functions as a chemoreceptor monitoring the environment for changes in sugar concentration. It can also phosphorylate mannose, methyl alpha-glucoside and 2-deoxy-glucose. This Salmonella typhimurium (strain LT2 / SGSC1412 / ATCC 700720) protein is PTS system glucose-specific EIICB component (ptsG).